The chain runs to 115 residues: Probable non-functional T cell receptor beta variable 7-3 (115 aa).

The signal sequence occupies residues 1–21 (MGTRLLCWAALCLLGADHTGA). Residues 22-115 (GVSQTPSNKV…SAAYLRASSL (94 aa)) enclose the Ig-like domain.

As to quaternary structure, most probably, the alpha-beta TR is not assembled due to incorrect folding of the beta chain. Alpha-beta TR is a heterodimer composed of an alpha and beta chain; disulfide-linked. The alpha-beta TR is associated with the transmembrane signaling CD3 coreceptor proteins to form the TR-CD3 (TcR or TCR). The assembly of alpha-beta TR heterodimers with CD3 occurs in the endoplasmic reticulum where a single alpha-beta TR heterodimer associates with one CD3D-CD3E heterodimer, one CD3G-CD3E heterodimer and one CD247 homodimer forming a stable octameric structure. CD3D-CD3E and CD3G-CD3E heterodimers preferentially associate with TR alpha and TR beta chains, respectively. The association of the CD247 homodimer is the last step of TcR assembly in the endoplasmic reticulum and is required for transport to the cell surface.

It is found in the cell membrane. Probable non-functional open reading frame (ORF) of V region of the variable domain of T cell receptor (TR) beta chain. Non-functional ORF generally cannot participate in the synthesis of a productive T cell receptor (TR) chain due to altered V-(D)-J or switch recombination and/or splicing site (at mRNA level) and/or conserved amino acid change (protein level). Alpha-beta T cell receptors are antigen specific receptors which are essential to the immune response and are present on the cell surface of T lymphocytes. Recognize peptide-major histocompatibility (MH) (pMH) complexes that are displayed by antigen presenting cells (APC), a prerequisite for efficient T cell adaptive immunity against pathogens. Binding of alpha-beta TR to pMH complex initiates TR-CD3 clustering on the cell surface and intracellular activation of LCK that phosphorylates the ITAM motifs of CD3G, CD3D, CD3E and CD247 enabling the recruitment of ZAP70. In turn ZAP70 phosphorylates LAT, which recruits numerous signaling molecules to form the LAT signalosome. The LAT signalosome propagates signal branching to three major signaling pathways, the calcium, the mitogen-activated protein kinase (MAPK) kinase and the nuclear factor NF-kappa-B (NF-kB) pathways, leading to the mobilization of transcription factors that are critical for gene expression and essential for T cell growth and differentiation. The T cell repertoire is generated in the thymus, by V-(D)-J rearrangement. This repertoire is then shaped by intrathymic selection events to generate a peripheral T cell pool of self-MH restricted, non-autoaggressive T cells. Post-thymic interaction of alpha-beta TR with the pMH complexes shapes TR structural and functional avidity. This Homo sapiens (Human) protein is Probable non-functional T cell receptor beta variable 7-3.